The following is a 258-amino-acid chain: Synapse differentiation-inducing gene protein 1 (258 aa).

The Cytoplasmic portion of the chain corresponds to 1-181 (MDGIIEQKSV…NFLMMPPRDH (181 aa)). A Phosphoserine modification is found at S137. Residues 182 to 202 (LGLSVFSMLCCFWPLGIAAFY) traverse the membrane as a helical segment. The Extracellular portion of the chain corresponds to 203 to 228 (LSHETNKAVAKGDFHQASTSSRRALF). Positions 229–249 (LAVLSITIGTGIYVGVAVALI) form an intramembrane region, helical. Residues 250–258 (AYLSKNNHL) are Extracellular-facing.

This sequence belongs to the CD225/Dispanin family. Homodimer. Interacts with GRIA1 and GRIA2. As to expression, brain-specific. Expressed in Purkinje neurons in cerebellum. Also detected in the hippocampus. Found at excitatory synapses and postsynaptic cells.

The protein resides in the cell membrane. It is found in the early endosome membrane. The protein localises to the postsynaptic density membrane. Its subcellular location is the synapse. It localises to the cell projection. The protein resides in the dendrite. It is found in the dendritic spine. Functionally, may regulate AMPA receptor content at nascent synapses, and have a role in postsynaptic development and maturation. In Mus musculus (Mouse), this protein is Synapse differentiation-inducing gene protein 1 (Syndig1).